Here is a 259-residue protein sequence, read N- to C-terminus: tRNA pseudouridine synthase A (259 aa).

Asp-52 functions as the Nucleophile in the catalytic mechanism. Substrate is bound at residue Tyr-113.

This sequence belongs to the tRNA pseudouridine synthase TruA family. As to quaternary structure, homodimer.

The enzyme catalyses uridine(38/39/40) in tRNA = pseudouridine(38/39/40) in tRNA. Functionally, formation of pseudouridine at positions 38, 39 and 40 in the anticodon stem and loop of transfer RNAs. The sequence is that of tRNA pseudouridine synthase A from Allorhizobium ampelinum (strain ATCC BAA-846 / DSM 112012 / S4) (Agrobacterium vitis (strain S4)).